The following is a 278-amino-acid chain: Probable endonuclease 4 (278 aa).

9 residues coordinate Zn(2+): His69, His109, Glu145, Asp179, His182, His214, Asp227, His229, and Glu259.

Belongs to the AP endonuclease 2 family. Requires Zn(2+) as cofactor.

The enzyme catalyses Endonucleolytic cleavage to 5'-phosphooligonucleotide end-products.. Functionally, endonuclease IV plays a role in DNA repair. It cleaves phosphodiester bonds at apurinic or apyrimidinic (AP) sites, generating a 3'-hydroxyl group and a 5'-terminal sugar phosphate. This is Probable endonuclease 4 from Phocaeicola vulgatus (strain ATCC 8482 / DSM 1447 / JCM 5826 / CCUG 4940 / NBRC 14291 / NCTC 11154) (Bacteroides vulgatus).